Consider the following 229-residue polypeptide: Platelet-activating factor acetylhydrolase IB subunit alpha2 (229 aa).

Position 2 is an N-acetylserine (Ser-2). At Ser-2 the chain carries Phosphoserine. Ser-48 is a catalytic residue. At Ser-64 the chain carries Phosphoserine. Residues Asp-193 and His-196 contribute to the active site. Thr-220 carries the post-translational modification Phosphothreonine.

Belongs to the 'GDSL' lipolytic enzyme family. Platelet-activating factor acetylhydrolase IB beta/gamma subunits subfamily. Forms a catalytic dimer which is either homodimer (alpha2/alpha2 homodimer) or heterodimer with PAFAH1B3 (alpha2/alpha1 heterodimer). Component of the cytosolic (PAF-AH (I)) heterotetrameric enzyme, which is composed of PAFAH1B1 (beta), PAFAH1B2 (alpha2) and PAFAH1B3 (alpha1) subunits. The catalytic activity of the enzyme resides in the alpha1 (PAFAH1B3) and alpha2 (PAFAH1B2) subunits, whereas the beta subunit (PAFAH1B1) has regulatory activity. Trimer formation is not essential for the catalytic activity. Interacts (homodimer form) with PAFAH1B1 (homodimer form); PAFAH1B2 competes with NDEL1 for PAFAH1B1 binding. Interacts with VLDLR; this interaction may modulate the Reelin pathway.

The protein localises to the cytoplasm. The enzyme catalyses a 1-O-alkyl-2-acetyl-sn-glycero-3-phosphocholine + H2O = a 1-O-alkyl-sn-glycero-3-phosphocholine + acetate + H(+). It carries out the reaction 1-O-hexadecyl-2-acetyl-sn-glycero-3-phosphocholine + H2O = 1-O-hexadecyl-sn-glycero-3-phosphocholine + acetate + H(+). The catalysed reaction is 1-O-hexadecyl-2-acetyl-sn-glycero-3-phosphate + H2O = 1-O-hexadecyl-sn-glycero-3-phosphate + acetate + H(+). It catalyses the reaction 1-O-hexadecyl-2-acetyl-sn-glycero-3-phosphoethanolamine + H2O = 1-O-hexadecyl-sn-glycero-3-phosphoethanolamine + acetate + H(+). With respect to regulation, beta subunit (PAFAH1B1) stimulates the acetylhydrolase activity of the alpha2/alpha2 catalytic homodimer. Alpha2 catalytic subunit of the cytosolic type I platelet-activating factor (PAF) acetylhydrolase (PAF-AH (I)) heterotetrameric enzyme that catalyzes the hydrolyze of the acetyl group at the sn-2 position of PAF and its analogs and modulates the action of PAF. The activity and substrate specificity of PAF-AH (I) are affected by its subunit composition. The alpha2/alpha2 homodimer (PAFAH1B2/PAFAH1B2 homodimer) hydrolyzes PAF and 1-O-alkyl-2-acetyl-sn-glycero-3-phosphorylethanolamine (AAGPE) more efficiently than 1-O-alkyl-2-acetyl-sn-glycero-3-phosphoric acid (AAGPA). In contrast, the alpha1/alpha2 heterodimer(PAFAH1B3/PAFAH1B3 heterodimer) hydrolyzes AAGPA more efficiently than PAF, but has little hydrolytic activity towards AAGPE. May play a role in male germ cell meiosis during the late pachytenestage and meiotic divisions as well as early spermiogenesis. This is Platelet-activating factor acetylhydrolase IB subunit alpha2 from Pongo abelii (Sumatran orangutan).